The chain runs to 668 residues: Cyclin-dependent kinase 11.2 (668 aa).

Positions 1-265 (MSNYSTNGSR…EQWESMTENE (265 aa)) are disordered. 3 stretches are compositionally biased toward basic and acidic residues: residues 35–73 (KTKE…DHRD), 85–127 (YCRD…DSLR), and 140–163 (LPDD…KTVM). Positions 164 to 181 (EVEDVEMSPVEMLDEEEV) are enriched in acidic residues. 2 stretches are compositionally biased toward basic and acidic residues: residues 197-212 (NEPE…DPES) and 245-265 (PDDK…TENE). The Protein kinase domain maps to 304–600 (YVILNVIAEG…ASEALQHDWF (297 aa)). ATP is bound by residues 310 to 318 (IAEGTYGEV) and lysine 333. The active-site Proton acceptor is aspartate 432.

This sequence belongs to the protein kinase superfamily. CMGC Ser/Thr protein kinase family. CDC2/CDKX subfamily. As to expression, expressed in somatic cells and at varying levels throughout the germline (at protein level). Highly expressed in the germ line of hermaphrodites (at protein level).

Its subcellular location is the nucleus. The protein localises to the cytoplasm. It catalyses the reaction L-seryl-[protein] + ATP = O-phospho-L-seryl-[protein] + ADP + H(+). The enzyme catalyses L-threonyl-[protein] + ATP = O-phospho-L-threonyl-[protein] + ADP + H(+). Its function is as follows. Probable cyclin-dependent kinase whose activity is most likely regulated by the cyclin cyl-1/Cylin-L. Acts partially redundantly with cdk-11.1 to ensure embryonic viability. In contrast to cdk-11.1, not essential for male and female fertility. The protein is Cyclin-dependent kinase 11.2 of Caenorhabditis elegans.